A 176-amino-acid chain; its full sequence is Sigma intracellular receptor 2 (176 aa).

Residues 1 to 9 (MGALAARRC) lie on the Cytoplasmic side of the membrane. The chain crosses the membrane as a helical span at residues 10-30 (VEWLLGLYFVSHIPITLFIDL). One can recognise an EXPERA domain in the interval 10–158 (VEWLLGLYFV…PYLIIPLILL (149 aa)). Residues 31-68 (QAVLPPELYPQEFSNLLRWYSKEFKDPLMQEPPVWFKS) are Lumenal-facing. The chain crosses the membrane as a helical span at residues 69–89 (FLLCELVFQLPFFPIAAYAFF). The cholesterol site is built by valine 75 and glutamine 77. The Cytoplasmic segment spans residues 90 to 99 (KGSCRWIRIP). The helical transmembrane segment at 100–120 (AIIYAAHTITTLIPILYTLLF) threads the bilayer. Over 121–140 (EDFSKAVAFKGQRPESFRER) the chain is Lumenal. A helical membrane pass occupies residues 141-161 (LTLVGVYAPYLIIPLILLLFM). Residues 162–176 (LRNPYYKYEEKRKKK) are Cytoplasmic-facing. The ER retention motif motif lies at 172 to 176 (KRKKK).

The protein belongs to the TMEM97/sigma-2 receptor family. As to quaternary structure, homodimer. Interacts with NPC1; the interaction impairs NPC1-mediated cholesterol transport. Interacts with PGRMC1 and LDLR; the interaction increases LDL internalization. Interacts with histatin 1/HTN1; the interaction induces HTN1-stimulating wound healing. Interacts with TSPO.

It localises to the rough endoplasmic reticulum membrane. Its subcellular location is the nucleus membrane. Functionally, sigma-2 receptor which contributes to ameliorate dysfunctional cellular processes and slow degenerative progression by regulating cell functions including cholesterol biosynthesis/trafficking, membrane trafficking, autophagy, lipid membrane-bound protein trafficking, and receptor stabilization at the cell surface. Forms a ternary complex with PGRMC1 receptor and low density lipoprotein receptor/LDLR at the plasma membrane, which increases LDLR-mediated LDL cholesterol internalization. Decreases lysosomal sterol transporter NPC1 availability to the cell, probably through NPC1-binding, hence controlling lipid transport, including cholesterol and LBPA, outside of late endosome/lysosome. Binds regio- and stereoselective ligand 20(S)-hydroxycholesterol (20(S)-OHC) which enhances TMEM97-NPC1 interaction and decreases TMEM97-PGRMC1 and TMEM97-TSPO interactions, thereby linking OHC binding to cholesterol homeostasis. Also able to bind cholesterol. Binds histatin 1 (Hst 1)/HN1 salivary peptide at the ER membrane, which is critical for increasing mitochondria-ER contacts and stimulating Hst1 wound healing properties. May alter the activity of some cytochrome P450 proteins. Although shows homologies with sterol isomerases (EXPERA domain), not able to catalyze sterol isomerization. However, may act as sensors of these molecules. Acts as a quality control factor in the ER, promoting the proteolytic degradation of nonproductive and extramitochondrial precursor proteins in the ER membrane thus removing them from the ER surface. This chain is Sigma intracellular receptor 2, found in Mus musculus (Mouse).